Consider the following 2789-residue polypeptide: MPSDAKDSVNGDLLLNWTSLKNILSGLNASFPLHNNTGSSTVTTSKSIKDPRLMRREESMGEQSSTAGLNEVLQFEKSSDNVNSEIKSTPSNSASSSEVVPGDCAVLTNGLDTPCFKTSVNDSQSWAHNMGSEDYDCIPPNKVTMAGQCKDQGNFSFPISVSNVVSEVENQNHSEEKAQRAQQESGNAYTKEYSSHIFQDSQSSDLKTIYQTGCQTSTVFPLKKKVSIDEYLQNTGKMKNFADLEDSSKHEEKQTSWKEIDNDFTNETKISPIDNYIVLHQEYKESESHNSFGKSCDKILITQELEITKSSTSTIKDKDELDHLALEWQITPSFESLSQKHPQHSVEYEGNIHTSLAIAQKLMELKLGKINQNYASIITEAFPKPKDIPQAKEMFIDTVISSYNIETAHDSSNCSITREHICVHRKNENEPVSLENIQRDYKETAYVEDRGQDHNLFCNSQLSNDIWLNVNFKKQTDRENQNEAKENSASCVENNIENIYGDKKQDSHTNENFSNIDEKEDKNYHNIEILSSEEFSTKFNLICREDNAVSAATALLESEEDTISAVKQKDTENTGRSVEHLASTTFPKTASSSVCVASNAAIQIASATMPALSLNNDDHQIYQFKETCSSESPDFGLLVKHRVSDCEIDTDKNKSQESFHQSINENLVLQSIELESEIEIELEDCDDAFIFQQDTHSHENMLCEEFVTSYKALKSRISWEGLLALDNGEMEVLESTTGRENSDQHYSKESNYFYSSTQNNETELTSPILLPDLQIKITNIFRPGFSPTADSLALKDSFCTHVTEATKPEINKEDGEILGFDIYSQPFGENADYPCEDKVDNIRQESGPVSNSEISLSFDLSRNTDVNHTSENQNSESLFTEPSNVTTIDDGSRCFFTKSKTDYNDTKNKKEVESRISKRKLHISSRDQNIPHKDLRRHKIYGRKRRLTSQDSSECFSSLSQGRIKTFSQSEKHIKSVLNILSDEASLCKSKCLSRKLDKAVVHLKKAHRRVHTSLQLITKVGEERKGPLPKSYAIICNNFWESCDLQGYSSVSQRKYYSTKHFSSKRKYDKRRKKRAPKADISKSLTHVSKHKSYKTSGEKKCLSRKSMASSVSKSHPTTSHMGEFCNQEHPESQLPVSSTSQSTSQSVYYNSSVSNPSLSEEHQPFSGKTAYLFSPDHSDEKLIEKENQIDTAFLSSTSKYEKLEKHSANHNVKDATKENSCDANEVINESNSVSLSCIKENINSSTGNDCDATCIGHTKAKTDVLISVLDSNVKHFLNDLYQQGNLILSDCKRNLEVKWTDPIERPKQNIITGNFLMGPLNLTLIASKKYSIPQLSAAAVTDSEGESSKSYLDKQRILTVDSFAASSTVPHCEQSCREKELLKTEQCSSGNCLHTDGNETNVTENYELDVASGTEEDKSYGENIVELSSSDSSLLLKDNVKGSSSETCIVKKDTEDRITWKVKQAEKAKDSVYKRSMTEGSTVNTEYKNQKNQISEESCLNEKIITTNLIDSHLSTKNTTTESVPLKNTVSNPLNKREKKGEIKVSKDSQSDLTLHSEIAYISKPGILGVNHTPILPAHSETCKVPTLLKKPASYVSDFKEKHCSANHTALIANLSQILQRADEASSLQILQEETKVCLNILPLFVEAFERKQECSVEQILISRELLVDQNLWNNCKHTLKPCAVDTLVELQMMMETIQFIENKKRHLEGEPTLRSLLWYDETLYAELLGKPRGFQQQSNFYPGFQGRLKYNAFCELQTYHDQLVELLEETKREKNSYYVFLKYKRQVNECEAIMEHCSDCFDFSLSVPFTCGVNFGDSLEDLEILRKSTLKLINVCGDSPKVHSYPGKQDHLWIIIEMISSKVNFIKNNEAVRVKISLYGLEHIFFDAAKNLVWKERTQSFSKKYSQKKDEERLLRVNKCAFSKLQKIYDTLSKDLNNEPISPIGLEEDTIIASRKSDHPINEATISIENSKFNSNLLAHPDICCISEILDQAEFADLKKLQDLTLRCTDHLEILKKYFQMLQDNNMDNIFITEENVLDVVINHSHEAIILKPEAIEMYIEIVMVSETIHFLKNSIAKKLDKQRFRGMLWFDLSLLPELVQCQEKMASFSFLKDNSTDVCLWKVIETAVSELKKDLDIICKYNEAVNCSYAIHLLSRELQELSEIKKLLKKSKYFISTYIDFVPYIASINYGSTVTELEYNYNQFSTLLKNVMSAPRKDLGKMAHIRKVMKTIEHMKMICTKNAELTISFFLCQMLYNRRKILQLKRKEKMNIHIVKPGENNNKFSISTMLPPVSECINKNISNSSKKRPSTVDKCEDSQEQQQDTTVSSCKKLKVDMKDVTKINREKATFKHPRTTGSHPKSENKIVPSSCDSLKRNHLTPKKVEMQRSLPGSLLPLENPKDTCASKSESKIDLTVSSDHFSGQQENLNSMKKRNVNFSAAETKSDKKDCAAFAICDQKSVHGTFSPDHGTLLQKFLKNSPDPTQKSCLSDINPETDVSLVPDASVLSKPIFCFVKDVHPDLEMNDTVFELQDNDIVNSSIKNSSCMTSPEPICIQNKIPTLQINKLQPTETESEDKYMKDTLNPNTVHTFGASGHITLNVNQGAEYSLSEQQNDKNSKVLMQNAATYWNELPQSACNPTYNSSEHLFGTSYPYSAWCVYQYSNSNGNAITQTYQGITSYEVQPSPSGLLTTVASTAQGTHSNLLYSQYFTYFAGEPQANGFVPVNGYFQSQIPASNFRQPIFSQYASHQPLPQATYPYLPNRFVPPEVPWVYAPWHQESFHPGH.

Positions 34 to 46 (HNNTGSSTVTTSK) are enriched in polar residues. Disordered regions lie at residues 34–99 (HNNT…SSEV), 169–191 (ENQN…AYTK), 1063–1166 (FSSK…EHQP), 2303–2331 (KNIS…DTTV), and 2351–2379 (KATF…DSLK). Basic and acidic residues predominate over residues 47 to 59 (SIKDPRLMRREES). The span at 80–98 (DNVNSEIKSTPSNSASSSE) shows a compositional bias: polar residues. A compositionally biased stretch (basic and acidic residues) spans 170–179 (NQNHSEEKAQ). Residues 1063–1077 (FSSKRKYDKRRKKRA) show a composition bias toward basic residues. Low complexity-rich tracts occupy residues 1106-1116 (RKSMASSVSKS) and 1134-1160 (SQLP…NPSL).

It belongs to the TEX15 family. As to quaternary structure, interacts with PIWIL4 and PIWIL2. Expressed in testis, predominantly in germ cells. Low expression, if any, in ovary. Also expressed in several cancers.

It is found in the cytoplasm. The protein resides in the nucleus. Its function is as follows. Required during spermatogenesis for normal chromosome synapsis and meiotic recombination in germ cells. Necessary for formation of DMC1 and RAD51 foci on meiotic chromosomes, suggesting a specific role in DNA double-stranded break repair. Essential executor of PIWIL4-piRNA pathway directed transposon DNA methylation and silencing in the male embryonic germ cells. PIWIL4-piRNA binds to nascent transposon transcripts and interacts with TEX15, which may in turn recruit the epigenetic silencing machinery to the transposon loci. Not required for piRNA biosynthesis. This Homo sapiens (Human) protein is Testis-expressed protein 15 (TEX15).